We begin with the raw amino-acid sequence, 184 residues long: Ribosome maturation factor RimP (184 aa).

This sequence belongs to the RimP family.

It is found in the cytoplasm. In terms of biological role, required for maturation of 30S ribosomal subunits. In Zymomonas mobilis subsp. mobilis (strain ATCC 31821 / ZM4 / CP4), this protein is Ribosome maturation factor RimP.